A 230-amino-acid chain; its full sequence is Uracil-DNA glycosylase (230 aa).

Asp-71 serves as the catalytic Proton acceptor.

The protein belongs to the uracil-DNA glycosylase (UDG) superfamily. UNG family.

The protein resides in the cytoplasm. The catalysed reaction is Hydrolyzes single-stranded DNA or mismatched double-stranded DNA and polynucleotides, releasing free uracil.. In terms of biological role, excises uracil residues from the DNA which can arise as a result of misincorporation of dUMP residues by DNA polymerase or due to deamination of cytosine. The protein is Uracil-DNA glycosylase of Tropheryma whipplei (strain TW08/27) (Whipple's bacillus).